We begin with the raw amino-acid sequence, 124 residues long: uncharacterized protein (124 aa).

Residues 2–22 (AIIIAIIAAVIVIAALITFNV) traverse the membrane as a helical segment. Residues 24-124 (NASPGPEKQE…ALLSMKNKKK (101 aa)) are disordered. Composition is skewed to basic and acidic residues over residues 30 to 58 (EKQEATDRIAPPEEEKNEAHYPAEARAAE), 67 to 81 (DSPKEKRDTMGDDIY), and 89 to 113 (KHSDEVHAEEEVTEESDKMQDRSYR).

The protein localises to the membrane. This is an uncharacterized protein from Bacillus subtilis (strain 168).